Reading from the N-terminus, the 415-residue chain is Phosphoglycerate kinase (415 aa).

Positions 23, 24, 25, 26, 39, 40, 63, 64, 66, 67, 122, 123, and 170 each coordinate (2R)-3-phosphoglycerate. G213 serves as a coordination point for ADP. Position 213 (G213) interacts with CDP. AMP is bound by residues A214 and K215. A214 lines the ATP pocket. Mg(2+) is bound at residue A214. D218 lines the CDP pocket. D218 contacts Mg(2+). K219 serves as a coordination point for AMP. K219 serves as a coordination point for ATP. G237 is a binding site for ADP. G237 is a CDP binding site. AMP contacts are provided by G238 and G311. Residues G238 and G311 each contribute to the ATP site. CDP is bound by residues G336 and F341. Position 341 (F341) interacts with ADP. E342 contributes to the AMP binding site. The ATP site is built by E342, D373, and T374. D373 is a binding site for Mg(2+).

The protein belongs to the phosphoglycerate kinase family. In terms of assembly, monomer. Mg(2+) serves as cofactor.

It localises to the cytoplasm. Its subcellular location is the mitochondrion. It catalyses the reaction (2R)-3-phosphoglycerate + ATP = (2R)-3-phospho-glyceroyl phosphate + ADP. Its pathway is carbohydrate degradation; glycolysis; pyruvate from D-glyceraldehyde 3-phosphate: step 2/5. Functionally, catalyzes one of the two ATP producing reactions in the glycolytic pathway via the reversible conversion of 1,3-diphosphoglycerate to 3-phosphoglycerate. Both L- and D- forms of purine and pyrimidine nucleotides can be used as substrates, but the activity is much lower on pyrimidines. Negatively regulates the biosynthesis of acetyl-CoA from pyruvate in the mitochondrion. This chain is Phosphoglycerate kinase (PGKA), found in Penicillium chrysogenum (Penicillium notatum).